Here is a 121-residue protein sequence, read N- to C-terminus: Cytochrome B5-like protein (121 aa).

A helical membrane pass occupies residues 1-21; that stretch reads MIAVIGLLLGFLVSALFLIQG. The disordered stretch occupies residues 24–49; it reads RRTNDNQEKKRSSSEPVEDVVRPKSY. A compositionally biased stretch (basic and acidic residues) spans 26 to 36; sequence TNDNQEKKRSS. In terms of domain architecture, Cytochrome b5 heme-binding spans 46-121; it reads PKSYSKSEVA…IEDFYIGELH (76 aa). Heme contacts are provided by His81 and His104.

Belongs to the cytochrome b5 family.

It is found in the membrane. In Arabidopsis thaliana (Mouse-ear cress), this protein is Cytochrome B5-like protein.